Here is a 179-residue protein sequence, read N- to C-terminus: ATP-dependent protease subunit HslV (179 aa).

T8 is a catalytic residue. Residues S164, C167, and T170 each contribute to the Na(+) site.

Belongs to the peptidase T1B family. HslV subfamily. A double ring-shaped homohexamer of HslV is capped on each side by a ring-shaped HslU homohexamer. The assembly of the HslU/HslV complex is dependent on binding of ATP.

It is found in the cytoplasm. It carries out the reaction ATP-dependent cleavage of peptide bonds with broad specificity.. Allosterically activated by HslU binding. Its function is as follows. Protease subunit of a proteasome-like degradation complex believed to be a general protein degrading machinery. The polypeptide is ATP-dependent protease subunit HslV (Staphylococcus carnosus (strain TM300)).